Here is a 232-residue protein sequence, read N- to C-terminus: Large ribosomal subunit protein uL1 (232 aa).

The protein belongs to the universal ribosomal protein uL1 family. Part of the 50S ribosomal subunit.

Functionally, binds directly to 23S rRNA. The L1 stalk is quite mobile in the ribosome, and is involved in E site tRNA release. In terms of biological role, protein L1 is also a translational repressor protein, it controls the translation of the L11 operon by binding to its mRNA. The polypeptide is Large ribosomal subunit protein uL1 (Burkholderia ambifaria (strain MC40-6)).